We begin with the raw amino-acid sequence, 470 residues long: ATP synthase subunit beta (470 aa).

ATP is bound at residue 156 to 163 (GGAGVGKT).

The protein belongs to the ATPase alpha/beta chains family. In terms of assembly, F-type ATPases have 2 components, CF(1) - the catalytic core - and CF(0) - the membrane proton channel. CF(1) has five subunits: alpha(3), beta(3), gamma(1), delta(1), epsilon(1). CF(0) has three main subunits: a(1), b(2) and c(9-12). The alpha and beta chains form an alternating ring which encloses part of the gamma chain. CF(1) is attached to CF(0) by a central stalk formed by the gamma and epsilon chains, while a peripheral stalk is formed by the delta and b chains.

It localises to the cell inner membrane. The enzyme catalyses ATP + H2O + 4 H(+)(in) = ADP + phosphate + 5 H(+)(out). Functionally, produces ATP from ADP in the presence of a proton gradient across the membrane. The catalytic sites are hosted primarily by the beta subunits. This chain is ATP synthase subunit beta, found in Thermosipho africanus (strain TCF52B).